The chain runs to 484 residues: Adenylosuccinate synthetase, chloroplastic (484 aa).

A chloroplast-targeting transit peptide spans 1 to 44 (MSLSTLSHPAAAAAGSGKSLFPAGPAAQSVHFPKARLPVPAAVS). GTP is bound by residues 71–77 (GDEGKGK) and 99–101 (GHT). Asp72 (proton acceptor) is an active-site residue. Residues Asp72 and Gly99 each contribute to the Mg(2+) site. IMP is bound by residues 72–75 (DEGK), 97–100 (NAGH), Thr189, Arg203, Gln283, Thr298, and Arg362. His100 acts as the Proton donor in catalysis. 358–364 (TTTGRPR) lines the substrate pocket. Residues Arg364, 390-392 (KLD), and 473-475 (GVG) each bind GTP.

Belongs to the adenylosuccinate synthetase family. In terms of assembly, homodimer. It depends on Mg(2+) as a cofactor.

The protein resides in the plastid. The protein localises to the chloroplast. It catalyses the reaction IMP + L-aspartate + GTP = N(6)-(1,2-dicarboxyethyl)-AMP + GDP + phosphate + 2 H(+). The protein operates within purine metabolism; AMP biosynthesis via de novo pathway; AMP from IMP: step 1/2. In terms of biological role, plays an important role in the de novo pathway and in the salvage pathway of purine nucleotide biosynthesis. Catalyzes the first committed step in the biosynthesis of AMP from IMP. This Zea mays (Maize) protein is Adenylosuccinate synthetase, chloroplastic.